A 235-amino-acid chain; its full sequence is Sugar fermentation stimulation protein homolog (235 aa).

The protein belongs to the SfsA family.

The chain is Sugar fermentation stimulation protein homolog from Pseudomonas paraeruginosa (strain DSM 24068 / PA7) (Pseudomonas aeruginosa (strain PA7)).